The sequence spans 151 residues: UPF0208 membrane protein YfbV (151 aa).

Transmembrane regions (helical) follow at residues 46–65 (YAIR…QIAL) and 69–91 (LGPA…WWLG).

This sequence belongs to the UPF0208 family.

Its subcellular location is the cell inner membrane. The sequence is that of UPF0208 membrane protein YfbV from Shigella boydii serotype 18 (strain CDC 3083-94 / BS512).